The primary structure comprises 64 residues: Large ribosomal subunit protein bL35 (64 aa).

The disordered stretch occupies residues 1–23; sequence MPKMKTKSGAAKRFKKTANGFKH.

The protein belongs to the bacterial ribosomal protein bL35 family.

In Stutzerimonas stutzeri (strain A1501) (Pseudomonas stutzeri), this protein is Large ribosomal subunit protein bL35.